A 91-amino-acid chain; its full sequence is UPF0250 protein PSPTO_4820 (91 aa).

It belongs to the UPF0250 family.

This Pseudomonas syringae pv. tomato (strain ATCC BAA-871 / DC3000) protein is UPF0250 protein PSPTO_4820.